The sequence spans 149 residues: UPF0336 protein CMM_2793 (149 aa).

In terms of domain architecture, MaoC-like spans A16–G117.

Belongs to the UPF0336 family.

The protein is UPF0336 protein CMM_2793 of Clavibacter michiganensis subsp. michiganensis (strain NCPPB 382).